A 130-amino-acid chain; its full sequence is Small ribosomal subunit protein uS9 (130 aa).

Belongs to the universal ribosomal protein uS9 family.

The protein is Small ribosomal subunit protein uS9 of Xanthomonas campestris pv. campestris (strain 8004).